The following is a 927-amino-acid chain: Isoleucine--tRNA ligase (927 aa).

Residues 57–67 carry the 'HIGH' region motif; sequence PFANGNIHMGH. L-isoleucyl-5'-AMP is bound at residue Glu553. The 'KMSKS' region signature appears at 594-598; sequence KMSKS. Lys597 provides a ligand contact to ATP. Zn(2+) contacts are provided by Cys886, Cys889, Cys906, and Cys909.

Belongs to the class-I aminoacyl-tRNA synthetase family. IleS type 1 subfamily. As to quaternary structure, monomer. Zn(2+) serves as cofactor.

Its subcellular location is the cytoplasm. The catalysed reaction is tRNA(Ile) + L-isoleucine + ATP = L-isoleucyl-tRNA(Ile) + AMP + diphosphate. Functionally, catalyzes the attachment of isoleucine to tRNA(Ile). As IleRS can inadvertently accommodate and process structurally similar amino acids such as valine, to avoid such errors it has two additional distinct tRNA(Ile)-dependent editing activities. One activity is designated as 'pretransfer' editing and involves the hydrolysis of activated Val-AMP. The other activity is designated 'posttransfer' editing and involves deacylation of mischarged Val-tRNA(Ile). The polypeptide is Isoleucine--tRNA ligase (Lactobacillus helveticus (strain DPC 4571)).